Consider the following 199-residue polypeptide: RNA-free ribonuclease P (199 aa).

It belongs to the HARP family.

The enzyme catalyses Endonucleolytic cleavage of RNA, removing 5'-extranucleotides from tRNA precursor.. In terms of biological role, RNA-free RNase P that catalyzes the removal of the 5'-leader sequence from pre-tRNA to produce the mature 5'-terminus. The sequence is that of RNA-free ribonuclease P from Pyrococcus furiosus (strain ATCC 43587 / DSM 3638 / JCM 8422 / Vc1).